The primary structure comprises 186 residues: Ribosome-recycling factor (186 aa).

Residues 144–163 (EKDGVIGQDESRAQSERVQK) are disordered.

The protein belongs to the RRF family.

It localises to the cytoplasm. In terms of biological role, responsible for the release of ribosomes from messenger RNA at the termination of protein biosynthesis. May increase the efficiency of translation by recycling ribosomes from one round of translation to another. This chain is Ribosome-recycling factor, found in Rhizobium johnstonii (strain DSM 114642 / LMG 32736 / 3841) (Rhizobium leguminosarum bv. viciae).